The following is a 628-amino-acid chain: Rac GTPase-activating protein 1 (628 aa).

An N-acetylmethionine modification is found at Met1. Residues Gln33–Cys110 are a coiled coil. Positions Ile107–Arg286 are interaction with SLC26A8. Ser150 is modified (phosphoserine; by PLK1). Ser155 carries the post-translational modification Phosphoserine. Phosphoserine; by PLK1 is present on Ser158. Thr162 is subject to Phosphothreonine. Residues Ser165 and Ser171 each carry the phosphoserine; by PLK1 modification. The disordered stretch occupies residues Lys179–Lys201. Phosphoserine is present on residues Ser204, Ser207, and Ser215. Residues Ser242 to Gly284 are disordered. Lys249 participates in a covalent cross-link: Glycyl lysine isopeptide (Lys-Gly) (interchain with G-Cter in SUMO2). The residue at position 258 (Ser258) is a Phosphoserine. Positions Asp274–Gly283 are enriched in polar residues. The segment at Leu287 to Cys336 adopts a Phorbol-ester/DAG-type zinc-finger fold. Thr343 is subject to Phosphothreonine. In terms of domain architecture, Rho-GAP spans Gly350 to Trp540. A Phosphoserine; by AURKB modification is found at Ser388. Lys405 participates in a covalent cross-link: Glycyl lysine isopeptide (Lys-Gly) (interchain with G-Cter in SUMO2). The residue at position 411 (Ser411) is a Phosphoserine; by AURKB. Phosphothreonine occurs at positions 564, 577, 585, and 602.

Heterotetramer of two molecules each of RACGAP1 and KIF23. Found in the centralspindlin complex. Associates with alpha-, beta- and gamma-tubulin and microtubules. Interacts via its Rho-GAP domain with RND2. Associates with AURKB during M phase. Interacts via its Rho-GAP domain and basic region with PRC1. The interaction with PRC1 inhibits its GAP activity towards CDC42 in vitro, which may be required for maintaining normal spindle morphology. Interacts with SLC26A8 via its N-terminus. Interacts with ECT2; the interaction is direct, occurs at anaphase and during cytokinesis in a microtubule-dependent manner, is enhanced by phosphorylation by PLK1 and phosphorylation at Ser-165 plays a major role in mediating binding. Interacts with RAB11FIP3; the interaction occurs at late telophase. Interacts with KIF23; the interaction is direct. Phosphorylated at multiple sites in the midbody during cytokinesis. Phosphorylation by AURKB on Ser-388 at the midbody is, at least in part, responsible for exerting its latent GAP activity towards RhoA. Phosphorylation on multiple serine residues by PLK1 enhances its association with ECT2 and is critical for cleavage furrow formation. Phosphorylation on Ser-165 plays a major role in mediating interaction with ECT2. Phosphorylation on Ser-158 does not appear to contribute to binding to ECT2. Highly expressed in testis, thymus and spleen and weakly expressed in brain, heart, skeletal muscle and kidney. In testis, expression is restricted to germ cells with the highest levels of expression found in spermatocytes. Not detected in adult liver. Also expressed in fetal liver and in several hematopoietic cell lines.

Its subcellular location is the nucleus. The protein localises to the cytoplasm. The protein resides in the cytoskeleton. It is found in the spindle. It localises to the cytoplasmic vesicle. Its subcellular location is the secretory vesicle. The protein localises to the acrosome. The protein resides in the cleavage furrow. It is found in the midbody. It localises to the midbody ring. Its subcellular location is the cell membrane. Component of the centralspindlin complex that serves as a microtubule-dependent and Rho-mediated signaling required for the myosin contractile ring formation during the cell cycle cytokinesis. Required for proper attachment of the midbody to the cell membrane during cytokinesis. Sequentially binds to ECT2 and RAB11FIP3 which regulates cleavage furrow ingression and abscission during cytokinesis. Plays key roles in controlling cell growth and differentiation of hematopoietic cells through mechanisms other than regulating Rac GTPase activity. Has a critical role in erythropoiesis. Also involved in the regulation of growth-related processes in adipocytes and myoblasts. May be involved in regulating spermatogenesis and in the RACGAP1 pathway in neuronal proliferation. Shows strong GAP (GTPase activation) activity towards CDC42 and RAC1 and less towards RHOA. Essential for the early stages of embryogenesis. May play a role in regulating cortical activity through RHOA during cytokinesis. May participate in the regulation of sulfate transport in male germ cells. In Mus musculus (Mouse), this protein is Rac GTPase-activating protein 1.